Here is a 493-residue protein sequence, read N- to C-terminus: MLALIVLCFILFFYIISRRHRGLCYPPGPTPLPIVGNLLSVLWESRKFKCHHLIWQSWSQKYGNLLGLRLGSINVVVVTGIELIREVSNREVFEGRPDGFFYTMRSFGKKLGLVFSDGPTWHRTRRFVLKYLKNFGYNSRFMNVYIGDECEALVQLRLADAGEPILVNQMFHITIVNILWRLVAGKRYDLEDQRLKELCSLVMRLFKLVDMSGGFLNFLPFLRHFVPRLIGFTELQEIHNALHQYLREIIKEHQENLQLGAPKDVIDAFLIDMLESQDDKPTLDDLQVVCLDLLEAGMETVTNTAVFMLLHVVRNEDVQRKLHQEIDDIIGRDRNPLLDDRIRMVYTEAVILETLRISTVASMGIPHMALNDAKLGNYIIPKGTFILLSLYELHHGPHWKDPETFRPERFLTKEGNILQDEWLIPFGIGKRRCIGEGLARSELFMFLTHILQKFHLRIPKNEPLPSTEPIDGLSLSAKQFRIIFEPRKTFKSI.

The N-terminal stretch at 1–24 (MLALIVLCFILFFYIISRRHRGLC) is a signal peptide. Cys-433 lines the heme pocket.

This sequence belongs to the cytochrome P450 family. The cofactor is heme. In terms of tissue distribution, constitutively expressed in corpora allata from the first instar larval to adult stages.

It catalyses the reaction (2E,6E)-farnesoate + reduced [NADPH--hemoprotein reductase] + O2 = juvenile hormone III carboxylate + oxidized [NADPH--hemoprotein reductase] + H2O + H(+). Functionally, catalyzes the conversion of farnesoate to juvenile hormone III acid in juvenile hormone biosynthesis. The chain is Farnesoate epoxidase from Bombyx mori (Silk moth).